The chain runs to 229 residues: METNFIGDDYGPLFHYQYRLIVIGDSTVGKSSLLRYFTEGKMAEISDPTVGVDFYARMIELRPGYRVKLQLWDTAGQEKFRSITKSYYRNSVGVLAIYDTTNRESFEHVENWVKEAALNLGGPSPSKCVFQLVGTKSDMDSQRQVNYEEGEYFAKYHKMKFIETSSRTGDNVNEAFHMIAQEIQNRVDDGELRPVDGWEGLKTGIMRSQSVCLSERSFPQNSSAGACGC.

73–77 serves as a coordination point for GTP; that stretch reads DTAGQ. Residues Cys-227 and Cys-229 are each lipidated (S-geranylgeranyl cysteine). The residue at position 229 (Cys-229) is a Cysteine methyl ester.

This sequence belongs to the small GTPase superfamily. Rab family. Interacts (in GTP-bound form) with Ras association domain-containing protein rsf-1.

It is found in the cell membrane. Its subcellular location is the cytoplasmic vesicle membrane. It localises to the golgi apparatus. Its function is as follows. Small GTPases Rab involved in autophagy. The small GTPases Rab are key regulators of intracellular membrane trafficking, from the formation of transport vesicles to their fusion with membranes. Rabs cycle between an inactive GDP-bound form and an active GTP-bound form that is able to recruit to membranes different sets of downstream effectors directly responsible for vesicle formation, movement, tethering and fusion. Involved in positively regulating the oxidative stress response, perhaps in concert with the Ras association domain-containing protein rsf-1. This Caenorhabditis elegans protein is Ras-related protein rab-39.